The sequence spans 179 residues: Adenine phosphoribosyltransferase (179 aa).

The protein belongs to the purine/pyrimidine phosphoribosyltransferase family. In terms of assembly, homodimer.

It is found in the cytoplasm. It catalyses the reaction AMP + diphosphate = 5-phospho-alpha-D-ribose 1-diphosphate + adenine. The protein operates within purine metabolism; AMP biosynthesis via salvage pathway; AMP from adenine: step 1/1. In terms of biological role, catalyzes a salvage reaction resulting in the formation of AMP, that is energically less costly than de novo synthesis. The polypeptide is Adenine phosphoribosyltransferase (Gluconobacter oxydans (strain 621H) (Gluconobacter suboxydans)).